The sequence spans 74 residues: Putative defensin-like protein 186 (74 aa).

Residues 1–22 (MKNSSIILVLVFFFFISSSGEA) form the signal peptide. 4 cysteine pairs are disulfide-bonded: C25–C74, C31–C51, C37–C68, and C41–C70.

This sequence belongs to the DEFL family.

The protein resides in the secreted. This chain is Putative defensin-like protein 186 (LCR40), found in Arabidopsis thaliana (Mouse-ear cress).